The chain runs to 128 residues: Azurin (128 aa).

The Plastocyanin-like domain maps to alanine 1–serine 128. A disulfide bridge links cysteine 2 with cysteine 25. Cu cation-binding residues include histidine 45, cysteine 111, histidine 116, and methionine 120.

Monomer. Interacts with the AAUA/AAUB heterotetramer complex. Cu cation is required as a cofactor.

It localises to the periplasm. Its function is as follows. Transfers electrons from cytochrome c551 to cytochrome oxidase. Transfers electrons from the tryptophan tryptophylquinone of the aromatic amine dehydrogenase heterotetramer. In Alcaligenes faecalis, this protein is Azurin.